The chain runs to 136 residues: Succinate dehydrogenase 2 membrane subunit SdhC (136 aa).

The next 3 helical transmembrane spans lie at 32–52 (RISG…AAML), 70–90 (IVGL…LNGI), and 109–129 (LWII…VVGI). A heme-binding site is contributed by H85.

This sequence belongs to the cytochrome b560 family. As to quaternary structure, part of an enzyme complex containing four subunits: a flavoprotein (SdhA), an iron-sulfur protein (SdhB), plus two membrane-anchoring proteins (SdhC and SdhD). Requires heme as cofactor.

The protein resides in the cell membrane. In terms of biological role, membrane-anchoring subunit of succinate dehydrogenase 2 (Sdh2). Sdh2 may catalyze the two-electron oxidation of succinate to fumarate with a corresponding reduction of quinone to quinol under low oxygen conditions, when the primary aerobic succinate dehydrogenase (Sdh1) is inhibited. Sdh2 seems to be the generator of the proton motive force (PMF) under hypoxia. This Mycobacterium tuberculosis (strain ATCC 25618 / H37Rv) protein is Succinate dehydrogenase 2 membrane subunit SdhC.